A 502-amino-acid chain; its full sequence is Activin receptor type-1-like (502 aa).

The first 22 residues, 1–22, serve as a signal peptide directing secretion; sequence MTLGSFRRGLLMLSVAFGLTRG. Over 23–119 the chain is Extracellular; sequence DLAKPSKLVN…EEPEVDAHLP (97 aa). N-linked (GlcNAc...) asparagine glycosylation is present at N32. Disulfide bonds link C33-C50, C35-C40, and C45-C68. A mediates specificity for BMP ligand region spans residues 72–75; sequence NQEL. 2 cysteine pairs are disulfide-bonded: C76/C88 and C89/C94. N97 is a glycosylation site (N-linked (GlcNAc...) asparagine). The chain crosses the membrane as a helical span at residues 120-140; that stretch reads LILGPVLALPVLVALGALGLW. At 141–502 the chain is on the cytoplasmic side; sequence RVRRRQEKQR…HNPEKPKVIH (362 aa). 3 positions are modified to phosphoserine: S154, S159, and S160. Positions 171–200 constitute a GS domain; that stretch reads SMLGDFLDSDCTTGSGSGLPFLVQRTVARQ. Positions 201–502 constitute a Protein kinase domain; it reads VALVECVGKG…HNPEKPKVIH (302 aa). ATP-binding positions include 207–215 and K228; that span reads VGKGRYGEV. D329 acts as the Proton acceptor in catalysis.

The protein belongs to the protein kinase superfamily. TKL Ser/Thr protein kinase family. TGFB receptor subfamily. Interacts with TSC22D1/TSC-22. It depends on Mg(2+) as a cofactor. Mn(2+) is required as a cofactor.

The protein localises to the cell membrane. The catalysed reaction is L-threonyl-[receptor-protein] + ATP = O-phospho-L-threonyl-[receptor-protein] + ADP + H(+). It catalyses the reaction L-seryl-[receptor-protein] + ATP = O-phospho-L-seryl-[receptor-protein] + ADP + H(+). Type I receptor for TGF-beta family ligands BMP9/GDF2 and BMP10 and important regulator of normal blood vessel development. On ligand binding, forms a receptor complex consisting of two type II and two type I transmembrane serine/threonine kinases. Type II receptors phosphorylate and activate type I receptors which autophosphorylate, then bind and activate SMAD transcriptional regulators. May bind activin as well. The polypeptide is Activin receptor type-1-like (Acvrl1) (Mus musculus (Mouse)).